The following is a 383-amino-acid chain: Chorismate synthase (383 aa).

Residues Arg39 and Arg45 each coordinate NADP(+). FMN-binding positions include 128 to 130, Gly291, 306 to 310, and Arg332; these read RAS and KPIAT.

This sequence belongs to the chorismate synthase family. As to quaternary structure, homotetramer. The cofactor is FMNH2.

It carries out the reaction 5-O-(1-carboxyvinyl)-3-phosphoshikimate = chorismate + phosphate. It participates in metabolic intermediate biosynthesis; chorismate biosynthesis; chorismate from D-erythrose 4-phosphate and phosphoenolpyruvate: step 7/7. In terms of biological role, catalyzes the anti-1,4-elimination of the C-3 phosphate and the C-6 proR hydrogen from 5-enolpyruvylshikimate-3-phosphate (EPSP) to yield chorismate, which is the branch point compound that serves as the starting substrate for the three terminal pathways of aromatic amino acid biosynthesis. This reaction introduces a second double bond into the aromatic ring system. This chain is Chorismate synthase, found in Thermus thermophilus (strain ATCC 27634 / DSM 579 / HB8).